The sequence spans 137 residues: MLQPKRTKFRKQQKGRNRGLAHRGSKVSFGEFALKATGRGRITARQIEAARRAMTRHVKRGGKIWIRVFPDKPITEKPLEVRQGKGKGNVEYWVCQIQPGKVLYEMEGVSEELAREAFTLAAAKLPVTTTFVKRSVM.

Residues 1–22 (MLQPKRTKFRKQQKGRNRGLAH) form a disordered region.

The protein belongs to the universal ribosomal protein uL16 family. Part of the 50S ribosomal subunit.

Functionally, binds 23S rRNA and is also seen to make contacts with the A and possibly P site tRNAs. This is Large ribosomal subunit protein uL16 from Saccharophagus degradans (strain 2-40 / ATCC 43961 / DSM 17024).